Consider the following 473-residue polypeptide: Fumarate hydratase class II (473 aa).

Substrate-binding positions include 104-106, 128-131, 138-140, and threonine 186; these read SGT, HPND, and SSN. Histidine 187 (proton donor/acceptor) is an active-site residue. Serine 318 is a catalytic residue. Residues serine 319 and 324–326 each bind substrate; that span reads KVN.

The protein belongs to the class-II fumarase/aspartase family. Fumarase subfamily. Homotetramer.

The protein localises to the cytoplasm. It catalyses the reaction (S)-malate = fumarate + H2O. The protein operates within carbohydrate metabolism; tricarboxylic acid cycle; (S)-malate from fumarate: step 1/1. Involved in the TCA cycle. Catalyzes the stereospecific interconversion of fumarate to L-malate. This is Fumarate hydratase class II from Corynebacterium glutamicum (strain ATCC 13032 / DSM 20300 / JCM 1318 / BCRC 11384 / CCUG 27702 / LMG 3730 / NBRC 12168 / NCIMB 10025 / NRRL B-2784 / 534).